The primary structure comprises 1180 residues: Protocadherin-12 (1180 aa).

The signal sequence occupies residues 1-17 (MMLLLPFLLGLLGPGSY). At 18–716 (LFISGDCQEV…HEPGVLSTPA (699 aa)) the chain is on the extracellular side. 5 Cadherin domains span residues 28–135 (ATVM…QPQF), 136–244 (PKDE…SPVF), 245–352 (AESS…APSI), 355–460 (TWAS…APVF), and 461–565 (EKSR…APEV). N-linked (GlcNAc...) asparagine glycosylation is found at Asn265 and Asn415. Residues Asn582, Asn659, and Asn662 are each glycosylated (N-linked (GlcNAc...) asparagine). The region spanning 600 to 711 (PAGTGIPPKA…LRDSAHEPGV (112 aa)) is the Cadherin 6 domain. A helical membrane pass occupies residues 717-737 (LALICLAVLLAIFGLLLALFV). Residues 738 to 1180 (SICRTERKDN…ESRLGCGRNL (443 aa)) are Cytoplasmic-facing. Disordered stretches follow at residues 857–930 (NASR…GPHQ) and 973–1026 (QFQP…PEED). Ser859 carries the post-translational modification Phosphoserine. Positions 904 to 918 (PASSATLRRQRNFNG) are enriched in polar residues. Residues 1014 to 1026 (PDLEEGPPSPEED) are compositionally biased toward acidic residues. Ser1064 is modified (phosphoserine). A compositionally biased stretch (polar residues) spans 1076–1093 (SSPDATTSEEPRTFQTFG). Disordered stretches follow at residues 1076–1104 (SSPD…ELSP) and 1156–1180 (SGAS…GRNL).

N-glycosylated. In terms of processing, cleaved by ADAM10 close to the transmembrane domain to release the Protocadherin-12, secreted form in the serum. Cleavage results in reduced cellular adhesion in a cell migration assay. In terms of tissue distribution, expressed in endothelial cells: localizes in vasculogenic rather than angiogenic endothelium. Strongly expressed in a subset of invasive cells of the placenta, named glycogen-rich trophoblasts cells (at protein level). glycogen-rich trophoblasts cells originate from the from the ectoplacental cone where they rapidly form tight islets (at protein level). In adult mice, present at high level in mesangial cells of kidney glomeruli, while expression was not detected in other types of perivascular cells.

It localises to the cell membrane. It is found in the cell junction. The protein resides in the secreted. Its function is as follows. Cellular adhesion molecule that may play an important role in cell-cell interactions at interendothelial junctions. Acts as a regulator of cell migration, probably via increasing cell-cell adhesion. Promotes homotypic calcium-dependent aggregation and adhesion and clusters at intercellular junctions. Unable to bind to catenins, weakly associates with the cytoskeleton. This chain is Protocadherin-12, found in Mus musculus (Mouse).